The sequence spans 513 residues: ATP synthase subunit alpha (513 aa).

169-176 serves as a coordination point for ATP; sequence GDRQTGKT.

It belongs to the ATPase alpha/beta chains family. As to quaternary structure, F-type ATPases have 2 components, CF(1) - the catalytic core - and CF(0) - the membrane proton channel. CF(1) has five subunits: alpha(3), beta(3), gamma(1), delta(1), epsilon(1). CF(0) has three main subunits: a(1), b(2) and c(9-12). The alpha and beta chains form an alternating ring which encloses part of the gamma chain. CF(1) is attached to CF(0) by a central stalk formed by the gamma and epsilon chains, while a peripheral stalk is formed by the delta and b chains.

The protein resides in the cell inner membrane. It carries out the reaction ATP + H2O + 4 H(+)(in) = ADP + phosphate + 5 H(+)(out). Functionally, produces ATP from ADP in the presence of a proton gradient across the membrane. The alpha chain is a regulatory subunit. The chain is ATP synthase subunit alpha from Thioalkalivibrio sulfidiphilus (strain HL-EbGR7).